The primary structure comprises 481 residues: Tryptophan--tRNA ligase, cytoplasmic (481 aa).

The WHEP-TRS domain maps to 12-68 (SPLELFNSIATQGELVRSLKAGNAPKDEIDSAVKMLLSLKMSYKAAMGEEYKAGCPP). K158 is subject to N6-succinyllysine. The short motif at 168–177 (PSSEAMHLGH) is the 'HIGH' region element. Positions 353-357 (KMSAS) match the 'KMSKS' region motif. At S355 the chain carries Phosphoserine.

It belongs to the class-I aminoacyl-tRNA synthetase family. In terms of assembly, homodimer. Interacts with oxidized form of GAPDH. Proteolytic cleavage generates 2 forms; T1-TrpRS and T2-TrpRS. In terms of tissue distribution, isoform 2 is widely expressed, isoform 1 is found only in embryonic stem cells.

It is found in the cytoplasm. It catalyses the reaction tRNA(Trp) + L-tryptophan + ATP = L-tryptophyl-tRNA(Trp) + AMP + diphosphate + H(+). Catalyzes the attachment of tryptophan to tRNA(Trp) in a two-step reaction: tryptophan is first activated by ATP to form Trp-AMP and then transferred to the acceptor end of the tRNA(Trp). Could also possess an angiostatic activity. The chain is Tryptophan--tRNA ligase, cytoplasmic from Mus musculus (Mouse).